A 324-amino-acid chain; its full sequence is NADH-ubiquinone oxidoreductase chain 1 (324 aa).

The next 9 membrane-spanning stretches (helical) occupy residues 9–29 (IINP…LTLL), 43–63 (PNIV…KLFI), 75–95 (FLFL…WAPM), 106–126 (LGVL…LGSG), 146–166 (ISYE…TGGF), 177–197 (SIWL…STLA), 237–257 (ILLM…IPAF), 259–279 (ELTA…FLWV), and 299–319 (FLPL…AMAG).

The protein belongs to the complex I subunit 1 family.

Its subcellular location is the mitochondrion inner membrane. It catalyses the reaction a ubiquinone + NADH + 5 H(+)(in) = a ubiquinol + NAD(+) + 4 H(+)(out). Its function is as follows. Core subunit of the mitochondrial membrane respiratory chain NADH dehydrogenase (Complex I) that is believed to belong to the minimal assembly required for catalysis. Complex I functions in the transfer of electrons from NADH to the respiratory chain. The immediate electron acceptor for the enzyme is believed to be ubiquinone. In Salmo salar (Atlantic salmon), this protein is NADH-ubiquinone oxidoreductase chain 1 (MT-ND1).